The primary structure comprises 341 residues: Glycerol-3-phosphate dehydrogenase [NAD(P)+] (341 aa).

Positions 14, 15, 35, and 108 each coordinate NADPH. Sn-glycerol 3-phosphate contacts are provided by Lys108 and Gly136. Ala140 is a binding site for NADPH. The sn-glycerol 3-phosphate site is built by Lys191, Asp244, Ser254, Arg255, and Asn256. Lys191 acts as the Proton acceptor in catalysis. Arg255 serves as a coordination point for NADPH. 2 residues coordinate NADPH: Val279 and Glu281.

This sequence belongs to the NAD-dependent glycerol-3-phosphate dehydrogenase family.

It localises to the cytoplasm. It catalyses the reaction sn-glycerol 3-phosphate + NAD(+) = dihydroxyacetone phosphate + NADH + H(+). The catalysed reaction is sn-glycerol 3-phosphate + NADP(+) = dihydroxyacetone phosphate + NADPH + H(+). The protein operates within membrane lipid metabolism; glycerophospholipid metabolism. Its function is as follows. Catalyzes the reduction of the glycolytic intermediate dihydroxyacetone phosphate (DHAP) to sn-glycerol 3-phosphate (G3P), the key precursor for phospholipid synthesis. This Pseudomonas syringae pv. tomato (strain ATCC BAA-871 / DC3000) protein is Glycerol-3-phosphate dehydrogenase [NAD(P)+].